Consider the following 232-residue polypeptide: Aquaporin Z 2 (232 aa).

Helical transmembrane passes span 9 to 29 (FLGT…ASAF) and 32 to 52 (VGIG…TMAY). Positions 63-65 (NPA) match the NPA 1 motif. 3 consecutive transmembrane segments (helical) span residues 82–102 (VSYV…LYVI), 129–149 (LTAA…IILG), and 158–178 (GFAP…SIPV). The NPA 2 motif lies at 184 to 186 (NPA). The helical transmembrane segment at 200–220 (LSQLWLFWIAPLFGAAIAGIV) threads the bilayer.

It belongs to the MIP/aquaporin (TC 1.A.8) family. In terms of assembly, homotetramer.

The protein localises to the cell inner membrane. It catalyses the reaction H2O(in) = H2O(out). Functionally, channel that permits osmotically driven movement of water in both directions. It is involved in the osmoregulation and in the maintenance of cell turgor during volume expansion in rapidly growing cells. It mediates rapid entry or exit of water in response to abrupt changes in osmolarity. This is Aquaporin Z 2 from Rhizobium meliloti (strain 1021) (Ensifer meliloti).